We begin with the raw amino-acid sequence, 537 residues long: Cytochrome P450 27C1 (537 aa).

Cys483 is a binding site for heme.

Belongs to the cytochrome P450 family. It depends on heme as a cofactor. Expressed in the dorsal third of retinal pigment epithelium, but not in the ventral counterpart (at protein level).

Its subcellular location is the membrane. The catalysed reaction is all-trans-retinol + 2 reduced [adrenodoxin] + O2 + 2 H(+) = all-trans-3,4-didehydroretinol + 2 oxidized [adrenodoxin] + 2 H2O. Its function is as follows. Efficiently catalyzes the conversion of all-trans retinol (also called vitamin A1, the precursor of 11-cis retinal) to 3,4-didehydroretinol (also called vitamin A2, the precursor of 11-cis 3,4-didehydroretinal), also acts on all-trans retinal and all-trans retinoic acid. The replacement of 11-cis retinal chromophore in photopigments with 11-cis 3,4-didehydroretinal enhances sensitivity to long-wavelength light. This may improve vision in fresh water which is often turbid. The chain is Cytochrome P450 27C1 (cyp27c1) from Aquarana catesbeiana (American bullfrog).